The chain runs to 533 residues: Trigger factor (533 aa).

The PPIase FKBP-type domain occupies 164-249; it reads GDQLIIDFTG…VKQVKVETDT (86 aa). The segment at 436–533 is disordered; the sequence is EAAIEAEAEE…APAKKPAAKK (98 aa). Over residues 465-477 the composition is skewed to basic residues; that stretch reads AAAKKAPAKKAPA. Residues 481–490 are compositionally biased toward basic and acidic residues; the sequence is AAKDGDEKPA. Composition is skewed to basic residues over residues 494–506 and 515–533; these read APAK…KAST and PAKK…AAKK.

This sequence belongs to the FKBP-type PPIase family. Tig subfamily.

The protein localises to the cytoplasm. It carries out the reaction [protein]-peptidylproline (omega=180) = [protein]-peptidylproline (omega=0). In terms of biological role, involved in protein export. Acts as a chaperone by maintaining the newly synthesized protein in an open conformation. Functions as a peptidyl-prolyl cis-trans isomerase. This is Trigger factor from Erythrobacter litoralis (strain HTCC2594).